The chain runs to 168 residues: Acetone carboxylase gamma subunit (168 aa).

In terms of assembly, heterohexamer of two alpha, two beta and two gamma subunits. Fe cation serves as cofactor. The cofactor is Mg(2+). Zn(2+) is required as a cofactor.

The catalysed reaction is acetone + hydrogencarbonate + 2 ATP + 3 H2O = acetoacetate + 2 AMP + 4 phosphate + 4 H(+). Functionally, catalyzes the carboxylation of acetone to form acetoacetate. Has a reduced activity on butanone, and no activity on 2-pentatone, 3-pentatone, 2-hexanone, chloroacetone, pyruvate, phosphoenolpyruvate, acetaldehyde, propionaldehyde and propylene oxide. The sequence is that of Acetone carboxylase gamma subunit from Xanthobacter autotrophicus (strain ATCC BAA-1158 / Py2).